The sequence spans 482 residues: Probable 2-carboxy-D-arabinitol-1-phosphatase (482 aa).

The N-terminal 34 residues, 1-34, are a transit peptide targeting the chloroplast; the sequence is MISLPLTTPILPSRCLLHKTRRQNSTRRRLLIRS. The active-site Tele-phosphohistidine intermediate is His-55. The active-site Proton donor/acceptor is the Glu-129.

The protein belongs to the phosphoglycerate mutase family.

Its subcellular location is the plastid. The protein resides in the chloroplast stroma. The enzyme catalyses 2-carboxy-D-arabinitol 1-phosphate + H2O = 2-carboxy-D-arabinitol + phosphate. Functionally, phosphoglycerate mutase-like protein lacking PGM activity, but having 2-carboxy-D-arabinitol 1-phosphate (CA1P) phosphatase activity. Prevents the accumulation of D-glycero-2,3-pentodiulose-1,5-bisphosphate (PDBP) a potent inhibitor of ribulose-1,5-bisphosphate carboxylase (RuBisCO). PDBP is produced during the oxidation of ribulose-1,5-bisphosphate, the substrate of RuBisCO. This is Probable 2-carboxy-D-arabinitol-1-phosphatase from Arabidopsis thaliana (Mouse-ear cress).